The sequence spans 346 residues: Large ribosomal subunit protein uL3 (346 aa).

Residues 324-346 are disordered; it reads RPPKKKPPVERPQITYVSRESKQ.

This sequence belongs to the universal ribosomal protein uL3 family. Part of the 50S ribosomal subunit. Forms a cluster with proteins L14 and L24e.

In terms of biological role, one of the primary rRNA binding proteins, it binds directly near the 3'-end of the 23S rRNA, where it nucleates assembly of the 50S subunit. This Thermococcus kodakarensis (strain ATCC BAA-918 / JCM 12380 / KOD1) (Pyrococcus kodakaraensis (strain KOD1)) protein is Large ribosomal subunit protein uL3.